A 608-amino-acid chain; its full sequence is RAS guanyl-releasing protein 2 (608 aa).

The N-terminal Ras-GEF domain occupies 4-126 (TLDLDKGCTV…SLIDIENVPT (123 aa)). A phosphoserine mark is found at Ser-116, Ser-117, and Ser-147. Residues 154–387 (EPLELAAHLT…YQLSLQREPR (234 aa)) form the Ras-GEF domain. The disordered stretch occupies residues 382 to 407 (LQREPRSKSSPTSPTTCTPPPRPPVL). 2 EF-hand domains span residues 426-461 (HIEK…FPYL) and 463-490 (AFGD…SSSM). Asp-439, Asp-441, Asp-443, His-445, Glu-450, Asp-468, Asn-470, Asp-472, Cys-474, and Glu-479 together coordinate Ca(2+). The Phorbol-ester/DAG-type zinc-finger motif lies at 498–548 (VHNFHESNSLRPVACRHCKALILGIYKQGLKCRACGVNCHKQCKDRLSVEC). A phosphoserine mark is found at Ser-554 and Ser-575. The segment at 556 to 591 (SLEGSAPSPSPTHTHHRAFSFSLPRPGRRGSRPPEI) is disordered.

The protein belongs to the RASGRP family. Forms a signaling complex with RAP1 and BRAF. Interacts with RAP1. Interacts with F-actin.

It is found in the cytoplasm. The protein resides in the cytosol. Its subcellular location is the cell membrane. The protein localises to the synapse. It localises to the synaptosome. It is found in the cell projection. The protein resides in the ruffle membrane. In terms of biological role, functions as a calcium- and DAG-regulated nucleotide exchange factor specifically activating Rap through the exchange of bound GDP for GTP. May also activate other GTPases such as RRAS, RRAS2, NRAS, KRAS but not HRAS. Functions in aggregation of platelets and adhesion of T-lymphocytes and neutrophils probably through inside-out integrin activation. May function in the muscarinic acetylcholine receptor M1/CHRM1 signaling pathway. The sequence is that of RAS guanyl-releasing protein 2 (RASGRP2) from Bos taurus (Bovine).